A 368-amino-acid chain; its full sequence is tRNA-specific 2-thiouridylase MnmA (368 aa).

ATP contacts are provided by residues 14-21 (AMSGGVDS) and Leu-40. Cys-108 functions as the Nucleophile in the catalytic mechanism. A disulfide bridge links Cys-108 with Cys-204. Gly-132 lines the ATP pocket. An interaction with tRNA region spans residues 154 to 156 (KDQ). The active-site Cysteine persulfide intermediate is the Cys-204.

Belongs to the MnmA/TRMU family.

The protein localises to the cytoplasm. It catalyses the reaction S-sulfanyl-L-cysteinyl-[protein] + uridine(34) in tRNA + AH2 + ATP = 2-thiouridine(34) in tRNA + L-cysteinyl-[protein] + A + AMP + diphosphate + H(+). Its function is as follows. Catalyzes the 2-thiolation of uridine at the wobble position (U34) of tRNA, leading to the formation of s(2)U34. This is tRNA-specific 2-thiouridylase MnmA from Rickettsia canadensis (strain McKiel).